The primary structure comprises 275 residues: T cell receptor alpha chain MC.7.G5 (275 aa).

Residues M1–A21 form the signal peptide. Residues Q22–S116 enclose the Ig-like V-type domain. Positions Q22–S116 are t cell receptor alpha variable 38-2DV8. C43 and C112 are oxidised to a cystine. The tract at residues T47–Y53 is CDR1. Residues Q71–E81 form a CDR2 region. A glycan (N-linked (GlcNAc...) asparagine) is linked at N78. Residues C112–F124 are CDR3. Positions N119–P134 are t cell receptor alpha joining 31. The interval I136–S275 is t cell receptor alpha constant. Residues K154–T242 enclose the Ig-like C1-type domain. A disulfide bond links C157 and C207. N167, N201, N212, and N248 each carry an N-linked (GlcNAc...) asparagine glycan. Residues C229 to S250 are connecting peptide. A helical membrane pass occupies residues V251–W273. Topologically, residues S274–S275 are cytoplasmic.

As to quaternary structure, disulfide-linked heterodimer with TRBV25-1*01J2S3*01C2*01 beta chain. The alpha-beta TR associates with the transmembrane signaling CD3 coreceptor proteins to form the TR-CD3 (TCR). The assembly of alpha-beta TR heterodimers with CD3 occurs in the endoplasmic reticulum where a single alpha-beta TR heterodimer associates with one CD3D-CD3E heterodimer, one CD3G-CD3E heterodimer and one CD247 homodimer forming a stable octameric structure. CD3D-CD3E and CD3G-CD3E heterodimers preferentially associate with TR alpha and TR beta chains (via TM domain), respectively. The association of the CD247 homodimer is the last step of TCR assembly in the endoplasmic reticulum and is required for transport to the cell surface. Expressed in MR1-restricted CD8-positive T cells.

Its subcellular location is the cell membrane. Functionally, the alpha chain of TRAV38-2DV8*01J31*01C*01/TRBV25-1*01J2S3*01C2*01 alpha-beta T cell receptor (TR) clonotype that displays pan-cancer cell recognition via the invariant MR1 molecule. On CD8-positive T cell clone MC.7.G5, likely recognizes tumor-specific or -associated metabolite(s) essential for cancer cell survival, triggering killing of many cancer cell types including lung, melanoma, leukemia, colon, breast, prostate, bone and ovarian cancer cells. Mediates cancer cell cytotoxicity in an HLA-independent manner. Has no reactivity to healthy cells, even stressed or infected by bacteria. Antigen recognition initiates TR-CD3 clustering on the cell surface and intracellular activation of LCK that phosphorylates the ITAM motifs of CD3G, CD3D, CD3E and CD247 enabling the recruitment of ZAP70. In turn, ZAP70 phosphorylates LAT, which recruits numerous signaling molecules to form the LAT signalosome. The LAT signalosome propagates signal branching to three major signaling pathways, the calcium, the mitogen-activated protein kinase (MAPK) kinase and the nuclear factor NF-kappa-B (NF-kB) pathways, leading to the mobilization of transcription factors that are critical for gene expression and essential for T cell differentiation into effector/memory T cells. In Homo sapiens (Human), this protein is T cell receptor alpha chain MC.7.G5.